A 1439-amino-acid chain; its full sequence is Histone-lysine N-methyltransferase NSD3 (1439 aa).

The interval 121–151 (PHEILEKPSPPQPPPPPSVPQTVIPKKTGSP) is disordered. Pro residues predominate over residues 128 to 139 (PSPPQPPPPPSV). At Ser-150 the chain carries Phosphoserine. Positions 154 to 157 (KLKI) match the KIKL motif. Positions 181-247 (QASEHTKSKH…PREEPVLKEA (67 aa)) are disordered. Residues 187 to 201 (KSKHESRKEKRKKSN) show a composition bias toward basic residues. Basic and acidic residues predominate over residues 202–244 (RHESSRSEERRSHKIPKLEPEGQNRPNERVDTAPEKPREEPVL). Residues Lys-218 and Lys-245 each participate in a glycyl lysine isopeptide (Lys-Gly) (interchain with G-Cter in SUMO2) cross-link. One can recognise a PWWP 1 domain in the interval 270-333 (VGDLVWSKVG…EKRVREYKGH (64 aa)). Disordered stretches follow at residues 344-367 (AKQA…ERAQ) and 401-466 (EASS…PPPV). Composition is skewed to polar residues over residues 401–413 (EASS…VTSK) and 425–445 (VLNS…QSST). Residue Lys-413 forms a Glycyl lysine isopeptide (Lys-Gly) (interchain with G-Cter in SUMO2) linkage. Position 457 is a phosphoserine (Ser-457). Glycyl lysine isopeptide (Lys-Gly) (interchain with G-Cter in SUMO2) cross-links involve residues Lys-502 and Lys-532. Residues 540–695 (QDRLIISSPS…VDSSLSRRGV (156 aa)) are disordered. Over residues 546–568 (SSPSQRSEKPAQSASSPEATSGS) the composition is skewed to polar residues. A compositionally biased stretch (basic and acidic residues) spans 583 to 595 (TRSESEKSAEVVP). Phosphoserine is present on residues Ser-585, Ser-587, and Ser-590. A Glycyl lysine isopeptide (Lys-Gly) (interchain with G-Cter in SUMO2) cross-link involves residue Lys-628. Positions 637 to 648 (STDVETASCTYR) are enriched in polar residues. Ser-655 carries the phosphoserine modification. Over residues 670 to 691 (DSPSATADADASDAQSVDSSLS) the composition is skewed to low complexity. 3 consecutive PHD-type zinc fingers follow at residues 701-748 (DTVC…CETG), 749-805 (QHPC…CSME), and 862-955 (VGFC…CKAG). At Lys-790 the chain carries N6-acetyllysine. The 66-residue stretch at 960–1025 (YKQIVWVKLG…QGRVFPYVEG (66 aa)) folds into the PWWP 2 domain. A coiled-coil region spans residues 1036 to 1065 (INKTFKKALEEAAKRFQELKAQRESKEALE). The AWS domain occupies 1096 to 1146 (SEIPRCNCKPGDENPCGLESQCLNRMSQYECHPQVCPAGDRCQNQCFTKRL). One can recognise an SET domain in the interval 1148-1265 (PDAEVIKTER…AGMELTFNYN (118 aa)). Residue Lys-1154 forms a Glycyl lysine isopeptide (Lys-Gly) (interchain with G-Cter in SUMO2) linkage. A Post-SET domain is found at 1272–1288 (GRTVCHCGADNCSGFLG). The PHD-type 4; atypical zinc-finger motif lies at 1323–1370 (EDYCFQCGDGGELVMCDKKDCPKAYHLLCLNLTQPPHGKWECPWHRCD).

The protein belongs to the class V-like SAM-binding methyltransferase superfamily. Histone-lysine methyltransferase family. SET2 subfamily. In terms of assembly, interacts with BRD4. Interacts (via KIKL motif) with BRD3 (via NET domain).

Its subcellular location is the nucleus. It is found in the chromosome. It catalyses the reaction L-lysyl(4)-[histone H3] + 2 S-adenosyl-L-methionine = N(6),N(6)-dimethyl-L-lysyl(4)-[histone H3] + 2 S-adenosyl-L-homocysteine + 2 H(+). It carries out the reaction L-lysyl(27)-[histone H3] + 2 S-adenosyl-L-methionine = N(6),N(6)-dimethyl-L-lysyl(27)-[histone H3] + 2 S-adenosyl-L-homocysteine + 2 H(+). Its function is as follows. Histone methyltransferase. Preferentially dimethylates 'Lys-4' and 'Lys-27' of histone H3 forming H3K4me2 and H3K27me2. H3 'Lys-4' methylation represents a specific tag for epigenetic transcriptional activation, while 'Lys-27' is a mark for transcriptional repression. In Mus musculus (Mouse), this protein is Histone-lysine N-methyltransferase NSD3 (Nsd3).